Here is a 164-residue protein sequence, read N- to C-terminus: Respiratory growth induced protein 2 (164 aa).

It belongs to the RGI1 family.

It is found in the cytoplasm. Involved in the control of energetic metabolism and significantly contribute to cell fitness, especially under respiratory growth conditions. The polypeptide is Respiratory growth induced protein 2 (RGI2) (Saccharomyces cerevisiae (strain JAY291) (Baker's yeast)).